A 335-amino-acid polypeptide reads, in one-letter code: MSVKVAINGFGRIGRNVLRAIIESGRTDIEVVAINDLGPVETNAHLFRFDSVHGRFPGEVKVAGDTIDVGRGPIKVTAVRNPAELPHKELGVDIALECTGIFTSRDKAAAHLAAGAKRVLVSAPADGADLTVVYGVNHEKLTNEHLVVSNASCTTNCLAPVAKVLNDAVGIEKGFMTTIHAYTGDQPTLDTMHKDLYRARAAAMSMIPTSTGAAKAVGLVLPELAGKLDGTSIRVPTPNVSVIDLKFVAKRATSKEEINEAIIAAASQQLKGILGFTDQPNVSIDFNHNPNSSTFHLDQTKVMEGTLVRVLSWYDNEWGFSNRMSDTAVAMGKLG.

Residues Arg-12–Ile-13, Asp-36, Arg-80, and Ser-122 contribute to the NAD(+) site. Residues Ser-152–Thr-154, Thr-183, Arg-198, Thr-211–Gly-212, and Arg-234 contribute to the D-glyceraldehyde 3-phosphate site. Catalysis depends on Cys-153, which acts as the Nucleophile. Residue Asn-316 coordinates NAD(+).

It belongs to the glyceraldehyde-3-phosphate dehydrogenase family. Homotetramer.

Its subcellular location is the cytoplasm. The catalysed reaction is D-glyceraldehyde 3-phosphate + phosphate + NAD(+) = (2R)-3-phospho-glyceroyl phosphate + NADH + H(+). The protein operates within carbohydrate degradation; glycolysis; pyruvate from D-glyceraldehyde 3-phosphate: step 1/5. Functionally, catalyzes the oxidative phosphorylation of glyceraldehyde 3-phosphate (G3P) to 1,3-bisphosphoglycerate (BPG) using the cofactor NAD. The first reaction step involves the formation of a hemiacetal intermediate between G3P and a cysteine residue, and this hemiacetal intermediate is then oxidized to a thioester, with concomitant reduction of NAD to NADH. The reduced NADH is then exchanged with the second NAD, and the thioester is attacked by a nucleophilic inorganic phosphate to produce BPG. This Xanthobacter flavus protein is Glyceraldehyde-3-phosphate dehydrogenase (gap).